Consider the following 445-residue polypeptide: N-succinylarginine dihydrolase (445 aa).

Substrate is bound by residues 19–28 (AGLSFGNVAS), Asn110, and 137–138 (HR). Residue Glu174 is part of the active site. Arg214 is a binding site for substrate. Residue His250 is part of the active site. Asp252 and Asn363 together coordinate substrate. Cys369 acts as the Nucleophile in catalysis.

It belongs to the succinylarginine dihydrolase family. As to quaternary structure, homodimer.

It carries out the reaction N(2)-succinyl-L-arginine + 2 H2O + 2 H(+) = N(2)-succinyl-L-ornithine + 2 NH4(+) + CO2. It participates in amino-acid degradation; L-arginine degradation via AST pathway; L-glutamate and succinate from L-arginine: step 2/5. Catalyzes the hydrolysis of N(2)-succinylarginine into N(2)-succinylornithine, ammonia and CO(2). The protein is N-succinylarginine dihydrolase of Shewanella woodyi (strain ATCC 51908 / MS32).